Consider the following 874-residue polypeptide: Trimodular acetylaranotin synthesis protein ataIMG (874 aa).

Positions Met-1 to Ile-339 are aminotransferase ataI. A disordered region spans residues Arg-20 to Ile-39. The segment covering Phe-23–Thr-37 has biased composition (polar residues). The tract at residues Ser-340–Thr-668 is O-methyltransferase ataM. Asp-625 serves as a coordination point for S-adenosyl-L-methionine. The glutathione S-transferase ataG stretch occupies residues Leu-669 to His-874. The region spanning Lys-699–Thr-766 is the GST N-terminal domain. The 136-residue stretch at Asp-739–His-874 folds into the GST C-terminal domain.

This sequence in the N-terminal section; belongs to the class-I pyridoxal-phosphate-dependent aminotransferase family. In the 2nd section; belongs to the class I-like SAM-binding methyltransferase superfamily. Cation-independent O-methyltransferase family. It in the C-terminal section; belongs to the GST superfamily. Pyridoxal 5'-phosphate serves as cofactor.

The enzyme catalyses RX + glutathione = an S-substituted glutathione + a halide anion + H(+). It functions in the pathway mycotoxin biosynthesis. Trimodular acetylaranotin synthesis protein; part of the gene cluster that mediates the biosynthesis of acetylaranotin, a member of the epipolythiodioxopiperazine (ETP) class of toxins characterized by a disulfide-bridged cyclic dipeptide. The first step of acetylaranotin biosynthesis is performed by the NRPS ataP which produces diketopiperazine cyclo-L-Phe-L-Phe via the condensation of 2 phenylalanines (L-Phe). The ataC domain of ataTC then catalyzes the formation of bishydroxylation of cyclo-L-Phe-L-Phe. The glutathione S-transferase domain ataG in ataIMG further catalyzes the conjugation of two glutathiones to the bishydroxylated intermediate. Next, the dipeptidase ataJ removes the Glu residues. The following step is performed by the carbon sulfur lyase domain ataI of ataIMG which may convert the bis-cysteinyl adduct to yield an epidithiol intermediate. The ataT domain from ataTC then catalyzes the oxidation of the free dithiols, followed by a cyclization step catalyzed by the cytochrome P450 ataF. AtaF probably acts as an epoxidase to promote a dual epoxidation formation at C8 and C9 along with C8' and C9', followed by the spontaneous nucleophilic attack of the amide nitrogens N10 and N10' to yield an intermediate with the pyrrolidine partial structure. The final steps of acetylaranotin biosynthesis involve the acetylation and ring rearrangement of an epitetrathiodiketopiperazine intermediate to produce acetylaranotin. AtaH probably catalyzes the acetylation of epitetrathiodiketopiperazine to produce a diacetate and ataY is responsible for the formation of the dihydrooxepin moiety that converts the diacetate intermediate to acetylaranotin via acetylapoaranotin. Both enzymes could function independently in the absence of the other. The acetylaranotin bis-thiomethyltransferase ataS located outside of acetylaranotin gene cluster is the main thiomethyltransferase responsible for converting acetylaranotin and its related intermediates to their methylated forms. The polypeptide is Trimodular acetylaranotin synthesis protein ataIMG (Aspergillus terreus (strain NIH 2624 / FGSC A1156)).